The primary structure comprises 419 residues: METPKPRILPWLVSQLDLGQLEGVAWLDESRTRFRIPWKHGLRQDAQMADFGIFQAWAEASGAYTPGKDKPDVSTWKRNFRSALNRKEVLRLAADNSKDPYDPHKVYEFVTPGARDFVHLGASPDTNGKSSLPHSQENLPKLFDGLILGPLKDEGSSDLAIVSDPSQQLPSPNVNNFLNPAPQENPLKQLLAEEQWEFEVTAFYRGRQVFQQTLFCPGGLRLVGSTADMTLPWQPVTLPDPEGFLTDKLVKEYVGQVLKGLGNGLALWQAGQCLWAQRLGHSHAFWALGEELLPDSGRGPDGEVHKDKDGAVFDLRPFVADLIAFMEGSGHSPRYTLWFCMGEMWPQDQPWVKRLVMVKVVPTCLKELLEMAREGGASSLKTVDLHISNSQPISLTSDQYKAYLQDLVEDMDFQATGNI.

Position 3 is a phosphothreonine (Thr3). The IRF tryptophan pentad repeat DNA-binding region spans 5-111 (KPRILPWLVS…DPHKVYEFVT (107 aa)). Ser14 is modified (phosphoserine). Thr75 is modified (phosphothreonine). A phosphoserine mark is found at Ser97, Ser123, and Ser135. The interval 140 to 419 (PKLFDGLILG…DMDFQATGNI (280 aa)) is mediates interaction with ZDHHC11. Lys188 participates in a covalent cross-link: Glycyl lysine isopeptide (Lys-Gly) (interchain with G-Cter in ISG15). An interaction with HERC5 region spans residues 194-353 (EQWEFEVTAF…MWPQDQPWVK (160 aa)). Thr230, Thr237, and Thr246 each carry phosphothreonine. Glycyl lysine isopeptide (Lys-Gly) (interchain with G-Cter in ISG15) cross-links involve residues Lys353 and Lys359. The residue at position 359 (Lys359) is an N6-acetyllysine. A Phosphoserine modification is found at Ser378. Diphosphoserine is present on Ser379. Ser379 is subject to Phosphoserine; by TBK1. Phosphoserine; by IKKE is present on Ser388. Ser390 bears the Phosphoserine mark. Thr396 bears the Phosphothreonine mark.

Belongs to the IRF family. In terms of assembly, monomer. Homodimer; phosphorylation-induced. Interacts (when phosphorylated) with CREBBP. Interacts with MAVS (via phosphorylated pLxIS motif). Interacts with TICAM1 (via phosphorylated pLxIS motif). Interacts with STING1 (via phosphorylated pLxIS motif). Interacts with IKBKE and TBK1. Interacts with TICAM2. Interacts with RBCK1. Interacts with HERC5. Interacts with DDX3X; the interaction allows the phosphorylation and activation of IRF3 by IKBKE. Interacts with TRIM21 and ULK1, in the presence of TRIM21; this interaction leads to IRF3 degradation by autophagy. Interacts with RIOK3; RIOK3 probably mediates the interaction of TBK1 with IRF3. Interacts with ILRUN; the interaction inhibits IRF3 binding to its DNA consensus sequence. Interacts with LYAR; this interaction impairs IRF3 DNA-binding activity. Interacts with TRAF3. Interacts with ZDHHC11; ZDHHC11 recruits IRF3 to STING1 upon DNA virus infection and thereby promotes IRF3 activation. Interacts with HSP90AA1; the interaction mediates IRF3 association with TOMM70. Interacts with BCL2; the interaction decreases upon Sendai virus infection. Interacts with BAX; the interaction is direct, increases upon virus infection and mediates the formation of the apoptosis complex TOMM70:HSP90AA1:IRF3:BAX. Interacts with DDX56. Interacts with NBR1. Post-translationally, constitutively phosphorylated on many Ser/Thr residues. Activated following phosphorylation by TBK1 and IKBKE. Innate adapter proteins, such as MAVS, STING1 or TICAM1, are first activated by viral RNA, cytosolic DNA, and bacterial lipopolysaccharide (LPS), respectively, leading to activation of the kinases TBK1 and IKBKE. These kinases then phosphorylate the adapter proteins on the pLxIS motif, leading to recruitment of IRF3, thereby licensing IRF3 for phosphorylation by TBK1. Phosphorylation at Ser-379 is followed by pyrophosphorylation at the same residue, promoting phosphorylation at Ser-388. Phosphorylated IRF3 dissociates from the adapter proteins, dimerizes, and then enters the nucleus to induce IFNs. In terms of processing, pyrophosphorylated by UAP1 following phosphorylation at Ser-379 by TBK1. Pyrophosphorylation promotes subsequent phosphorylation at Ser-388, leading to homodimerization of IRF3. Acetylation at Lys-359 by KAT8 inhibits recruimtent to promoters and transcription factor activity. Acetylation by KAT8 is promoted by phosphorylation at Ser-388. Post-translationally, ubiquitinated; ubiquitination involves RBCK1 leading to proteasomal degradation. Polyubiquitinated; ubiquitination involves TRIM21 leading to proteasomal degradation. Ubiquitinated by UBE3C, leading to its degradation. Deubiquitinated by USP5 on both 'Lys-48'-linked unanchored and 'Lys-63'-linked anchored polyubiquitin, leading to inhibition of anti-RNA viral innate immunity. In terms of processing, ISGylated by HERC5 resulting in sustained IRF3 activation and in the inhibition of IRF3 ubiquitination by disrupting PIN1 binding. The phosphorylation state of IRF3 does not alter ISGylation. Proteolytically cleaved by apoptotic caspases during apoptosis, leading to its inactivation. Cleavage by CASP3 during virus-induced apoptosis inactivates it, preventing cytokine overproduction.

It localises to the cytoplasm. The protein resides in the nucleus. Its subcellular location is the mitochondrion. Its activity is regulated as follows. In the absence of viral infection, maintained as a monomer in an autoinhibited state. Phosphorylation by TBK1 and IKBKE disrupts this autoinhibition leading to the liberation of the DNA-binding and dimerization activities and its nuclear localization where it can activate type I IFN and ISG genes. Phosphorylation and activation follow the following steps: innate adapter proteins, such as MAVS, STING1 or TICAM1, are first activated by viral RNA, cytosolic DNA and bacterial lipopolysaccharide (LPS), respectively, leading to activation of the kinases TBK1 and IKBKE. These kinases then phosphorylate the adapter proteins on their pLxIS motif, leading to recruitment of IRF3, thereby licensing IRF3 for phosphorylation by TBK1. Phosphorylated IRF3 dissociates from the adapter proteins, dimerizes, and then enters the nucleus to induce IFNs. Its function is as follows. Key transcriptional regulator of type I interferon (IFN)-dependent immune responses which plays a critical role in the innate immune response against DNA and RNA viruses. Regulates the transcription of type I IFN genes (IFN-alpha and IFN-beta) and IFN-stimulated genes (ISG) by binding to an interferon-stimulated response element (ISRE) in their promoters. Acts as a more potent activator of the IFN-beta (IFNB) gene than the IFN-alpha (IFNA) gene and plays a critical role in both the early and late phases of the IFNA/B gene induction. Found in an inactive form in the cytoplasm of uninfected cells and following viral infection, double-stranded RNA (dsRNA), or toll-like receptor (TLR) signaling, is phosphorylated by IKBKE and TBK1 kinases. This induces a conformational change, leading to its dimerization and nuclear localization and association with CREB binding protein (CREBBP) to form dsRNA-activated factor 1 (DRAF1), a complex which activates the transcription of the type I IFN and ISG genes. Can activate distinct gene expression programs in macrophages and can induce significant apoptosis in primary macrophages. This chain is Interferon regulatory factor 3 (Irf3), found in Mus musculus (Mouse).